Reading from the N-terminus, the 188-residue chain is Putative manganese efflux pump MntP (188 aa).

6 helical membrane-spanning segments follow: residues 3–23 (LFSLWVMAFGLSMDAFAVSIC), 39–59 (AGLYFGLFQAVMPLIGFLLGV), 65–85 (ITDYDHWVAFFLLALIGVNML), 110–130 (LGFATSIDALAVGVTFAFLSV), 131–151 (DIYSSVVTIGLITAALSIIGV), and 167–187 (ILGGLILIGLGVKILMEHTLF).

This sequence belongs to the MntP (TC 9.B.29) family.

It localises to the cell inner membrane. In terms of biological role, probably functions as a manganese efflux pump. The protein is Putative manganese efflux pump MntP of Mannheimia succiniciproducens (strain KCTC 0769BP / MBEL55E).